A 166-amino-acid chain; its full sequence is Phospholipase A2 inhibitor clone 05 (166 aa).

The first 19 residues, methionine 1–glycine 19, serve as a signal peptide directing secretion. Positions leucine 46 to glutamate 161 constitute a C-type lectin domain. Disulfide bonds link cysteine 83/cysteine 160 and cysteine 138/cysteine 152. N-linked (GlcNAc...) asparagine glycosylation is present at asparagine 122.

Belongs to the alpha-type phospholipase A2 inhibitor family. Homotrimer; non-covalently linked. As to expression, expressed by the liver.

It localises to the secreted. Functionally, this phospholipase A2 inhibitor binds directly phospholipase A2 in the presence or absence of calcium. The chain is Phospholipase A2 inhibitor clone 05 from Bothrops moojeni (Lance-headed viper).